The following is a 319-amino-acid chain: Probable cytochrome c oxidase subunit 2 (319 aa).

Residues M1–G33 form the signal peptide. 2 helical membrane passes run W63–F83 and L101–F121. Positions 227, 262, 266, and 270 each coordinate Cu cation.

This sequence belongs to the cytochrome c oxidase subunit 2 family. It depends on Cu cation as a cofactor. Requires heme as cofactor.

The protein resides in the cell membrane. It carries out the reaction 4 Fe(II)-[cytochrome c] + O2 + 8 H(+)(in) = 4 Fe(III)-[cytochrome c] + 2 H2O + 4 H(+)(out). Its function is as follows. Subunits I and II form the functional core of the enzyme complex. Electrons originating in cytochrome c are transferred via heme a and Cu(A) to the binuclear center formed by heme a3 and Cu(B). This Streptomyces coelicolor (strain ATCC BAA-471 / A3(2) / M145) protein is Probable cytochrome c oxidase subunit 2 (ctaC).